Consider the following 240-residue polypeptide: Ubiquitin domain-containing protein 1 (240 aa).

Residues 1-48 (MGGCVGRPQGESQRSQSRASGQQRKRAGRNEPLKKERPRWKSDYPMTD) form a disordered region. Residues 12–22 (SQRSQSRASGQ) are compositionally biased toward low complexity. Positions 28–42 (GRNEPLKKERPRWKS) are enriched in basic and acidic residues. The 76-residue stretch at 153 to 228 (FQLKVRLSTG…DTSYCKPATR (76 aa)) folds into the Ubiquitin-like domain.

Its function is as follows. May be involved in the regulation of cellular senescence through a positive feedback loop with TP53. This Xenopus tropicalis (Western clawed frog) protein is Ubiquitin domain-containing protein 1 (ubtd1).